An 83-amino-acid polypeptide reads, in one-letter code: uncharacterized protein (83 aa).

This is an uncharacterized protein from Methanocaldococcus jannaschii (strain ATCC 43067 / DSM 2661 / JAL-1 / JCM 10045 / NBRC 100440) (Methanococcus jannaschii).